The primary structure comprises 365 residues: Forkhead box protein H1 (365 aa).

The tract at residues 1–29 (MGPCSGSRLGPPEAESPSQPPKRRKKRYL) is disordered. The fork-head DNA-binding region spans 32–128 (DKPPYTYLAM…ALRLQNTALC (97 aa)). Residues 151-215 (GRPYRPPSPP…TPPLPSSERP (65 aa)) form a disordered region. The segment covering 154–164 (YRPPSPPPPPS) has biased composition (pro residues). Residues 273 to 354 (LWGQLPTSYL…VSHPRDLAAP (82 aa)) are SMAD-interaction domain (SID). A Fast/FoxH1 motif 1 (FM1) motif is present at residues 277 to 281 (LPTSY). Positions 287–293 (PNVVMPL) match the Fast/FoxH1 motif 2 (FM2) motif. Positions 327 to 348 (LDALFQGVPPNKSIYDVWVSHP) match the SMAD interaction motif (SIM) motif.

In terms of assembly, interacts with the MH2 domains of SMAD2 and SMAD3. As to expression, ubiquitous.

The protein localises to the nucleus. In terms of biological role, transcriptional activator. Recognizes and binds to the DNA sequence 5'-TGT[GT][GT]ATT-3'. Required for induction of the goosecoid (GSC) promoter by TGF-beta or activin signaling. Forms a transcriptionally active complex containing FOXH1/SMAD2/SMAD4 on a site on the GSC promoter called TARE (TGF-beta/activin response element). This is Forkhead box protein H1 (FOXH1) from Homo sapiens (Human).